We begin with the raw amino-acid sequence, 211 residues long: FMN-dependent NADH:quinone oxidoreductase (211 aa).

Residue 17-19 (SYS) coordinates FMN.

This sequence belongs to the azoreductase type 1 family. In terms of assembly, homodimer. Requires FMN as cofactor.

It catalyses the reaction 2 a quinone + NADH + H(+) = 2 a 1,4-benzosemiquinone + NAD(+). The catalysed reaction is N,N-dimethyl-1,4-phenylenediamine + anthranilate + 2 NAD(+) = 2-(4-dimethylaminophenyl)diazenylbenzoate + 2 NADH + 2 H(+). Its function is as follows. Quinone reductase that provides resistance to thiol-specific stress caused by electrophilic quinones. Also exhibits azoreductase activity. Catalyzes the reductive cleavage of the azo bond in aromatic azo compounds to the corresponding amines. This Bacillus velezensis (strain DSM 23117 / BGSC 10A6 / LMG 26770 / FZB42) (Bacillus amyloliquefaciens subsp. plantarum) protein is FMN-dependent NADH:quinone oxidoreductase.